A 327-amino-acid chain; its full sequence is Phenylalanine--tRNA ligase alpha subunit (327 aa).

Glu-252 contributes to the Mg(2+) binding site.

The protein belongs to the class-II aminoacyl-tRNA synthetase family. Phe-tRNA synthetase alpha subunit type 1 subfamily. As to quaternary structure, tetramer of two alpha and two beta subunits. Mg(2+) is required as a cofactor.

Its subcellular location is the cytoplasm. It catalyses the reaction tRNA(Phe) + L-phenylalanine + ATP = L-phenylalanyl-tRNA(Phe) + AMP + diphosphate + H(+). The polypeptide is Phenylalanine--tRNA ligase alpha subunit (Erwinia tasmaniensis (strain DSM 17950 / CFBP 7177 / CIP 109463 / NCPPB 4357 / Et1/99)).